Consider the following 210-residue polypeptide: NAD(P)H-quinone oxidoreductase subunit I (210 aa).

2 consecutive 4Fe-4S ferredoxin-type domains span residues 55-84 (GRIHYEFDKCIACEVCVRVCPINLPVVDWV) and 95-124 (RNYSIDFGVCIFCGNCVEYCPTNCLSMTEE). [4Fe-4S] cluster-binding residues include C64, C67, C70, C74, C104, C107, C110, and C114.

Belongs to the complex I 23 kDa subunit family. As to quaternary structure, NDH-1 is composed of at least 11 different subunits. The cofactor is [4Fe-4S] cluster.

The protein localises to the cellular thylakoid membrane. It carries out the reaction a plastoquinone + NADH + (n+1) H(+)(in) = a plastoquinol + NAD(+) + n H(+)(out). The enzyme catalyses a plastoquinone + NADPH + (n+1) H(+)(in) = a plastoquinol + NADP(+) + n H(+)(out). In terms of biological role, NDH-1 shuttles electrons from an unknown electron donor, via FMN and iron-sulfur (Fe-S) centers, to quinones in the respiratory and/or the photosynthetic chain. The immediate electron acceptor for the enzyme in this species is believed to be plastoquinone. Couples the redox reaction to proton translocation, and thus conserves the redox energy in a proton gradient. The protein is NAD(P)H-quinone oxidoreductase subunit I of Synechococcus sp. (strain CC9902).